Here is an 88-residue protein sequence, read N- to C-terminus: U24 protein (88 aa).

Thr-6 is modified (phosphothreonine). The PPXY motif motif lies at Pro-8–Tyr-11. The chain crosses the membrane as a helical span at residues Phe-58–Ile-78.

Interacts with host ITCH; this interaction probably mediates ITCH degradation. Interacts probably with NEDD4.

The protein resides in the membrane. Functionally, down-regulates the TCR/CD3E complex and the transferrin receptor TFRC in host T-cells by blocking them from recycling back to the cell surface. In Human herpesvirus 6B (strain Z29) (HHV-6 variant B), this protein is U24 protein (U24).